The primary structure comprises 224 residues: Peroxynitrite isomerase 2 (224 aa).

Residues 71-77 (GVWRGEG) carry the GXWXGXG motif. 2 residues coordinate heme b: lysine 187 and histidine 214.

The protein belongs to the nitrobindin family. As to quaternary structure, homodimer. Heme b is required as a cofactor.

It carries out the reaction peroxynitrite = nitrate. Its pathway is nitrogen metabolism. Heme-binding protein able to scavenge peroxynitrite and to protect free L-tyrosine against peroxynitrite-mediated nitration, by acting as a peroxynitrite isomerase that converts peroxynitrite to nitrate. Therefore, this protein likely plays a role in peroxynitrite sensing and in the detoxification of reactive nitrogen and oxygen species (RNS and ROS, respectively). Is able to bind nitric oxide (NO) in vitro, but may act as a sensor of peroxynitrite levels in vivo. This chain is Peroxynitrite isomerase 2, found in Mycobacterium sp. (strain JLS).